The primary structure comprises 701 residues: Elongation factor G (701 aa).

The tr-type G domain occupies 10–286 (NKVRNIGIMA…AVIDYLPSPL (277 aa)). Residues 19 to 26 (AHIDAGKT), 83 to 87 (DTPGH), and 137 to 140 (NKMD) contribute to the GTP site.

Belongs to the TRAFAC class translation factor GTPase superfamily. Classic translation factor GTPase family. EF-G/EF-2 subfamily.

The protein resides in the cytoplasm. Its function is as follows. Catalyzes the GTP-dependent ribosomal translocation step during translation elongation. During this step, the ribosome changes from the pre-translocational (PRE) to the post-translocational (POST) state as the newly formed A-site-bound peptidyl-tRNA and P-site-bound deacylated tRNA move to the P and E sites, respectively. Catalyzes the coordinated movement of the two tRNA molecules, the mRNA and conformational changes in the ribosome. The sequence is that of Elongation factor G from Mycobacteroides abscessus (strain ATCC 19977 / DSM 44196 / CCUG 20993 / CIP 104536 / JCM 13569 / NCTC 13031 / TMC 1543 / L948) (Mycobacterium abscessus).